Here is a 176-residue protein sequence, read N- to C-terminus: Mitochondrial inner membrane protein Mpv17 (176 aa).

Transmembrane regions (helical) follow at residues 18–38 (VQVL…QQLV), 53–73 (TMAS…YRVL), 94–114 (GGFA…LNGL), and 131–151 (LITN…LVPL).

Belongs to the peroxisomal membrane protein PXMP2/4 family.

It is found in the mitochondrion inner membrane. In terms of biological role, non-selective channel that modulates the membrane potential under normal conditions and oxidative stress, and is involved in mitochondrial homeostasis. Involved in mitochondrial deoxynucleoside triphosphates (dNTP) pool homeostasis and mitochondrial DNA (mtDNA) maintenance. May be involved in the regulation of reactive oxygen species metabolism and the control of oxidative phosphorylation. The chain is Mitochondrial inner membrane protein Mpv17 from Bos taurus (Bovine).